Reading from the N-terminus, the 491-residue chain is Protein translocase subunit SecY (491 aa).

Residues 1-20 (MGWKEAAAPVLTRMPAVERP) lie on the Cytoplasmic side of the membrane. A helical transmembrane segment spans residues 21-47 (EGHVPFRRKMYWTGGVLVLYFFLTNVP). At 48–58 (LWGIQTAGNDF) the chain is on the extracellular side. Residues 59 to 66 (FGQFRSLL) constitute an intramembrane region (helical). The chain crosses the membrane as a discontinuously helical span at residues 59–87 (FGQFRSLLAGGQGTVLQLGIGPIVTASIV). Residues 67 to 78 (AGGQGTVLQLGI) lie within the membrane without spanning it. Positions 79–87 (GPIVTASIV) form an intramembrane region, helical. The Cytoplasmic segment spans residues 88-109 (LQLLGGANLLGLDTDNDPRDQA). Residues 110-134 (IYQGLQKFLVGVMVVLTGAPMVFLG) traverse the membrane as a helical segment. Topologically, residues 135–152 (NFLQPSQQLAQSMPGGAF) are extracellular. Residues 153–177 (GVEVLIFAQIAAGGILLLFMDEVIS) form a helical membrane-spanning segment. Residues 178-183 (KWGVGS) are Cytoplasmic-facing. Residues 184–202 (GIGLFIVAGVSQSLVGGLV) traverse the membrane as a helical segment. The Extracellular segment spans residues 203–244 (FWEGGVGSQGLLPTWFDIIVGNVSNMPPLLSGSGIEFLLMQA). Residues 245 to 266 (GILGLLTTLFIYVVVVYAESVR) traverse the membrane as a helical segment. At 267–291 (VEIPLSHARVKGARGRFPVKLIYAS) the chain is on the cytoplasmic side. The chain crosses the membrane as a helical span at residues 292 to 313 (VLPMILVRALQANIQFLGQILN). Residues 314–365 (STLASMPTWLGVYGGNGQVTGGLFYYLAPIYSPNAWMWWTSGATAARWQVLI) are Extracellular-facing. The helical transmembrane segment at 366–385 (RIAIDLSFMIIGGAIFAIFW) threads the bilayer. Residues 386-428 (VETADMGPDATARQIQNSGMQIPGFRKNQGVIEKVMERYIPQV) are Cytoplasmic-facing. The chain crosses the membrane as a helical span at residues 429 to 447 (TVIGGALVGLLAVMANMLG). The Extracellular portion of the chain corresponds to 448–452 (TIGNV). Residues 453-467 (SGTGLLLTISITYKL) traverse the membrane as a helical segment. Topologically, residues 468 to 491 (YEEIAEEQMMEMHPMMREMFGGGD) are cytoplasmic.

Belongs to the SecY/SEC61-alpha family. As to quaternary structure, component of the Sec protein translocase complex. Heterotrimer consisting of alpha (SecY), beta (SecG) and gamma (SecE) subunits. The heterotrimers can form oligomers, although 1 heterotrimer is thought to be able to translocate proteins. Interacts with the ribosome. May interact with SecDF, and other proteins may be involved.

The protein resides in the cell membrane. Its function is as follows. The central subunit of the protein translocation channel SecYEG. Consists of two halves formed by TMs 1-5 and 6-10. These two domains form a lateral gate at the front which open onto the bilayer between TMs 2 and 7, and are clamped together by SecE at the back. The channel is closed by both a pore ring composed of hydrophobic SecY resides and a short helix (helix 2A) on the extracellular side of the membrane which forms a plug. The plug probably moves laterally to allow the channel to open. The ring and the pore may move independently. This chain is Protein translocase subunit SecY, found in Halobacterium salinarum (strain ATCC 700922 / JCM 11081 / NRC-1) (Halobacterium halobium).